The chain runs to 510 residues: ATP synthase subunit alpha (510 aa).

An ATP-binding site is contributed by 169–176; sequence GDRQTGKT.

The protein belongs to the ATPase alpha/beta chains family. As to quaternary structure, F-type ATPases have 2 components, CF(1) - the catalytic core - and CF(0) - the membrane proton channel. CF(1) has five subunits: alpha(3), beta(3), gamma(1), delta(1), epsilon(1). CF(0) has three main subunits: a(1), b(2) and c(9-12). The alpha and beta chains form an alternating ring which encloses part of the gamma chain. CF(1) is attached to CF(0) by a central stalk formed by the gamma and epsilon chains, while a peripheral stalk is formed by the delta and b chains.

It localises to the cell inner membrane. The catalysed reaction is ATP + H2O + 4 H(+)(in) = ADP + phosphate + 5 H(+)(out). In terms of biological role, produces ATP from ADP in the presence of a proton gradient across the membrane. The alpha chain is a regulatory subunit. The polypeptide is ATP synthase subunit alpha (Rickettsia conorii (strain ATCC VR-613 / Malish 7)).